Reading from the N-terminus, the 406-residue chain is S-adenosylmethionine synthase (406 aa).

Residue H16 participates in ATP binding. Residue D18 coordinates Mg(2+). E44 is a binding site for K(+). L-methionine is bound by residues E57 and Q109. The tract at residues 109-119 (QSPQIAQGVDE) is flexible loop. ATP-binding positions include 174–176 (DAK), 249–250 (RF), D258, 264–265 (RK), A281, and K285. D258 lines the L-methionine pocket. K289 is an L-methionine binding site.

It belongs to the AdoMet synthase family. Homotetramer; dimer of dimers. Requires Mg(2+) as cofactor. It depends on K(+) as a cofactor.

Its subcellular location is the cytoplasm. It carries out the reaction L-methionine + ATP + H2O = S-adenosyl-L-methionine + phosphate + diphosphate. The protein operates within amino-acid biosynthesis; S-adenosyl-L-methionine biosynthesis; S-adenosyl-L-methionine from L-methionine: step 1/1. Catalyzes the formation of S-adenosylmethionine (AdoMet) from methionine and ATP. The overall synthetic reaction is composed of two sequential steps, AdoMet formation and the subsequent tripolyphosphate hydrolysis which occurs prior to release of AdoMet from the enzyme. In Sphingopyxis alaskensis (strain DSM 13593 / LMG 18877 / RB2256) (Sphingomonas alaskensis), this protein is S-adenosylmethionine synthase.